The chain runs to 338 residues: Heat-inducible transcription repressor HrcA (338 aa).

This sequence belongs to the HrcA family.

In terms of biological role, negative regulator of class I heat shock genes (grpE-dnaK-dnaJ and groELS operons). Prevents heat-shock induction of these operons. This is Heat-inducible transcription repressor HrcA from Bacillus mycoides (strain KBAB4) (Bacillus weihenstephanensis).